The primary structure comprises 235 residues: Hydroxyacylglutathione hydrolase (235 aa).

Residues H53, H55, D57, H58, H109, D127, and H165 each coordinate Zn(2+).

The protein belongs to the metallo-beta-lactamase superfamily. Glyoxalase II family. As to quaternary structure, monomer. Zn(2+) is required as a cofactor.

The enzyme catalyses an S-(2-hydroxyacyl)glutathione + H2O = a 2-hydroxy carboxylate + glutathione + H(+). The protein operates within secondary metabolite metabolism; methylglyoxal degradation; (R)-lactate from methylglyoxal: step 2/2. Its function is as follows. Thiolesterase that catalyzes the hydrolysis of S-D-lactoyl-glutathione to form glutathione and D-lactic acid. This chain is Hydroxyacylglutathione hydrolase, found in Actinobacillus pleuropneumoniae serotype 5b (strain L20).